Here is a 319-residue protein sequence, read N- to C-terminus: Ferrochelatase (319 aa).

2 residues coordinate Fe cation: H193 and E274.

The protein belongs to the ferrochelatase family.

It is found in the cytoplasm. It catalyses the reaction heme b + 2 H(+) = protoporphyrin IX + Fe(2+). Its pathway is porphyrin-containing compound metabolism; protoheme biosynthesis; protoheme from protoporphyrin-IX: step 1/1. In terms of biological role, catalyzes the ferrous insertion into protoporphyrin IX. The chain is Ferrochelatase from Actinobacillus pleuropneumoniae serotype 3 (strain JL03).